Here is a 625-residue protein sequence, read N- to C-terminus: Tyrosine-protein kinase ITK/TSK (625 aa).

A PH domain is found at 4–117 (FILLEEQLIK…WVLTLKEETR (114 aa)). Residues 119-155 (NNSLVSKYHPNFWMDGRWRCCSQLEKPAVGCAPYDPS) form a Btk-type zinc finger. Zn(2+)-binding residues include His127, Cys138, Cys139, and Cys149. The disordered stretch occupies residues 153–174 (DPSKNASKKPLPPTPEDNRRSF). The 61-residue stretch at 177–237 (PEETLVIALY…PSSYLVEKSP (61 aa)) folds into the SH3 domain. At Tyr186 the chain carries Phosphotyrosine; by autocatalysis. The SH2 domain occupies 245–343 (WYNKSISRDK…GLVTRLRYPV (99 aa)). In terms of domain architecture, Protein kinase spans 368–620 (LTFVQEIGSG…SQLLSQLAEI (253 aa)). Residues 374–382 (IGSGQFGLV) and Lys396 each bind ATP. The active-site Proton acceptor is the Asp487. Tyr517 carries the phosphotyrosine; by LCK modification. Ser570 carries the post-translational modification Phosphoserine.

The protein belongs to the protein kinase superfamily. Tyr protein kinase family. TEC subfamily. As to quaternary structure, homooligomerizes; this association negatively regulates kinase activity. Interacts with PPIA/CYPA; this interaction regulates TCR signal strength via a proline-directed conformational switch in ITK. Interacts with THEMIS. Interacts with FASLG. Interacts with VAV1; this interaction is important for VAV1 localization and TCR-induced actin polarization. Interacts with TBX21. The cofactor is Zn(2+). Post-translationally, phosphorylated at Tyr-517 in the activation loop of the kinase domain by LCK. Subsequent autophosphorylation at Tyr-186 leads to the kinase activation. The autophosphorylated Tyr-186 lies within the substrate binding sequence of the SH3 domain. Ubiquitinated. In terms of tissue distribution, is detected in the thymus, lymph node and very faintly in the spleen, but is not detected in the liver, lung, kidney, heart, brain, intestine or testis. Expressed in T-lymphocytes and mast cells. It may also be expressed in natural killer cells.

Its subcellular location is the cytoplasm. The protein resides in the nucleus. The catalysed reaction is L-tyrosyl-[protein] + ATP = O-phospho-L-tyrosyl-[protein] + ADP + H(+). In terms of biological role, tyrosine kinase that plays an essential role in regulation of the adaptive immune response. Regulates the development, function and differentiation of conventional T-cells and nonconventional NKT-cells. When antigen presenting cells (APC) activate T-cell receptor (TCR), a series of phosphorylation lead to the recruitment of ITK to the cell membrane, in the vicinity of the stimulated TCR receptor, where it is phosphorylated by LCK. Phosphorylation leads to ITK autophosphorylation and full activation. Once activated, phosphorylates PLCG1, leading to the activation of this lipase and subsequent cleavage of its substrates. In turn, the endoplasmic reticulum releases calcium in the cytoplasm and the nuclear activator of activated T-cells (NFAT) translocates into the nucleus to perform its transcriptional duty. Phosphorylates 2 essential adapter proteins: the linker for activation of T-cells/LAT protein and LCP2. Then, a large number of signaling molecules such as VAV1 are recruited and ultimately lead to lymphokine production, T-cell proliferation and differentiation. Required for TCR-mediated calcium response in gamma-delta T-cells, may also be involved in the modulation of the transcriptomic signature in the Vgamma2-positive subset of immature gamma-delta T-cells. Phosphorylates TBX21 at 'Tyr-525' and mediates its interaction with GATA3. This Mus musculus (Mouse) protein is Tyrosine-protein kinase ITK/TSK (Itk).